The following is a 591-amino-acid chain: Laccase (591 aa).

The first 20 residues, 1-20 (MPSFFRALFSGLIASQLSWA), serve as a signal peptide directing secretion. 2 consecutive Plastocyanin-like domains span residues 66–189 (VRQY…IQID) and 198–356 (IDLG…HPTN). The N-linked (GlcNAc...) asparagine glycan is linked to asparagine 121. Histidine 126, histidine 128, histidine 171, and histidine 173 together coordinate Cu cation. Cystine bridges form between cysteine 147–cysteine 571 and cysteine 332–cysteine 366. Asparagine 234, asparagine 242, asparagine 265, and asparagine 323 each carry an N-linked (GlcNAc...) asparagine glycan. Asparagine 407 and asparagine 425 each carry an N-linked (GlcNAc...) asparagine glycan. Residues 416 to 551 (GHPITQYVIN…AGLGNTFLEQ (136 aa)) enclose the Plastocyanin-like 3 domain. Cu cation-binding residues include histidine 463, histidine 466, histidine 468, histidine 533, cysteine 534, histidine 535, and histidine 539.

Belongs to the multicopper oxidase family. It depends on Cu cation as a cofactor.

The protein localises to the secreted. The enzyme catalyses 4 hydroquinone + O2 = 4 benzosemiquinone + 2 H2O. Its function is as follows. Lignin degradation and detoxification of lignin-derived products. This Cryphonectria parasitica (Chestnut blight fungus) protein is Laccase (LAC-1).